Here is a 395-residue protein sequence, read N- to C-terminus: Type III polyketide synthase A (395 aa).

63-70 provides a ligand contact to CoA; it reads KLEHLCKT. The active-site Nucleophile is Cys-172. 224 to 225 is a binding site for substrate; that stretch reads GD. CoA-binding positions include Leu-274, 314–317, and Ala-317; that span reads GGPA.

The protein belongs to the thiolase-like superfamily. Chalcone/stilbene synthases family. In terms of assembly, homodimer. Interacts with 4CLL1/ACOS5 and TKPR1. As to expression, expressed in flowers and flower buds (at protein level), and, at very low levels, in roots, seedlings, leaves and stems. Mostly confined to anther tapetal cells.

Its subcellular location is the endoplasmic reticulum. Its pathway is secondary metabolite biosynthesis; flavonoid biosynthesis. Its function is as follows. Plant type III polyketide synthases (PKSs) that catalyzes the condensation of malonyl-CoA units with various CoA ester starter molecules to generate a diverse array of natural products including long-chain alkyl alpha-pyrones. Accepts up to C(20) chain-length fatty acyl CoAs as starter substrates, and carries out sequential condensations with malonyl-CoA to produce triketide and tetraketide alpha-pyrones, potential sporopollenin precursors. Favorite substrates for are midchain- and v-hydroxylated fatty acyl-CoAs (e.g. 12-hydroxyoctadecanoyl-CoA and 16-hydroxyhexadecanoyl-CoA). Required for pollen development and sporopollenin biosynthesis, the major constituent of exine in the outer pollen wall. In vitro, can use 4-coumaroyl-coenzyme A as substrate to produce bis-noryangonin and fatty acyl-coenzyme A as substrate to produce medium-chain alkyl pyrones. May play a role in both the synthesis of pollen fatty acids and phenolics found in exine. The polypeptide is Type III polyketide synthase A (Arabidopsis thaliana (Mouse-ear cress)).